A 285-amino-acid polypeptide reads, in one-letter code: Tryptophan synthase alpha chain (285 aa).

Catalysis depends on proton acceptor residues Glu53 and Asp64.

This sequence belongs to the TrpA family. As to quaternary structure, tetramer of two alpha and two beta chains.

It carries out the reaction (1S,2R)-1-C-(indol-3-yl)glycerol 3-phosphate + L-serine = D-glyceraldehyde 3-phosphate + L-tryptophan + H2O. The protein operates within amino-acid biosynthesis; L-tryptophan biosynthesis; L-tryptophan from chorismate: step 5/5. Its function is as follows. The alpha subunit is responsible for the aldol cleavage of indoleglycerol phosphate to indole and glyceraldehyde 3-phosphate. This Bordetella bronchiseptica (strain ATCC BAA-588 / NCTC 13252 / RB50) (Alcaligenes bronchisepticus) protein is Tryptophan synthase alpha chain.